Consider the following 465-residue polypeptide: tRNA modification GTPase MnmE (465 aa).

(6S)-5-formyl-5,6,7,8-tetrahydrofolate-binding residues include arginine 21, glutamate 85, and lysine 124. The 168-residue stretch at 220 to 387 (GVPVAIIGET…LQQRLVAAAH (168 aa)) folds into the TrmE-type G domain. Residue asparagine 230 coordinates K(+). GTP contacts are provided by residues 230-235 (NAGKST), 249-255 (SDIHGTT), and 274-277 (DTAG). Serine 234 is a binding site for Mg(2+). Residues serine 249, isoleucine 251, and threonine 254 each coordinate K(+). Position 255 (threonine 255) interacts with Mg(2+). Lysine 465 provides a ligand contact to (6S)-5-formyl-5,6,7,8-tetrahydrofolate.

This sequence belongs to the TRAFAC class TrmE-Era-EngA-EngB-Septin-like GTPase superfamily. TrmE GTPase family. Homodimer. Heterotetramer of two MnmE and two MnmG subunits. K(+) serves as cofactor.

Its subcellular location is the cytoplasm. Exhibits a very high intrinsic GTPase hydrolysis rate. Involved in the addition of a carboxymethylaminomethyl (cmnm) group at the wobble position (U34) of certain tRNAs, forming tRNA-cmnm(5)s(2)U34. In Bacteroides fragilis (strain ATCC 25285 / DSM 2151 / CCUG 4856 / JCM 11019 / LMG 10263 / NCTC 9343 / Onslow / VPI 2553 / EN-2), this protein is tRNA modification GTPase MnmE.